A 153-amino-acid polypeptide reads, in one-letter code: Calmodulin-like protein 4 (153 aa).

EF-hand domains lie at 8-43 (DQINEYKECFSLYDKQQRGKIKATDLLTVMRCLGAS), 44-79 (PTPGEAQRHLQTHRIDRNGELDFSTFLTIMHMQIKQ), 81-116 (DPKKEILLAMLMADKEKKGYIMASELRSKLMQLGEK), and 117-152 (LTHKEVEDLFREAGIEPNGKVKYDEFIQKLTIPVRD).

This sequence belongs to the calmodulin family. Interacts with MYO7B; the interaction mediates the association of CALML4 with the IMAC/intermicrovillar adhesion complex. Interacts with MYO7A.

It localises to the cell projection. It is found in the microvillus. As part of the intermicrovillar adhesion complex/IMAC plays a role in epithelial brush border differentiation, controlling microvilli organization and length. Acts as a light chain for MYO7B and is required for efficient targeting of the IMAC to the tips of border brush microvilli. This Bos taurus (Bovine) protein is Calmodulin-like protein 4 (CALML4).